A 208-amino-acid polypeptide reads, in one-letter code: Guanylate kinase (208 aa).

Residues 4-185 form the Guanylate kinase-like domain; that stretch reads GNLYIISAPS…ALVDLEHILR (182 aa). Position 11–18 (11–18) interacts with ATP; that stretch reads APSGAGKS.

This sequence belongs to the guanylate kinase family.

It localises to the cytoplasm. The catalysed reaction is GMP + ATP = GDP + ADP. Essential for recycling GMP and indirectly, cGMP. The polypeptide is Guanylate kinase (Histophilus somni (strain 129Pt) (Haemophilus somnus)).